Here is a 292-residue protein sequence, read N- to C-terminus: 4-diphosphocytidyl-2-C-methyl-D-erythritol kinase (292 aa).

The active site involves lysine 10. An ATP-binding site is contributed by 94 to 104; sequence PVAAGLAGGSS. Aspartate 136 is a catalytic residue.

The protein belongs to the GHMP kinase family. IspE subfamily.

The catalysed reaction is 4-CDP-2-C-methyl-D-erythritol + ATP = 4-CDP-2-C-methyl-D-erythritol 2-phosphate + ADP + H(+). Its pathway is isoprenoid biosynthesis; isopentenyl diphosphate biosynthesis via DXP pathway; isopentenyl diphosphate from 1-deoxy-D-xylulose 5-phosphate: step 3/6. Catalyzes the phosphorylation of the position 2 hydroxy group of 4-diphosphocytidyl-2C-methyl-D-erythritol. The protein is 4-diphosphocytidyl-2-C-methyl-D-erythritol kinase of Brevibacillus brevis (strain 47 / JCM 6285 / NBRC 100599).